Reading from the N-terminus, the 243-residue chain is Protein canopy homolog 3 (243 aa).

The N-terminal stretch at 1 to 15 is a signal peptide; that stretch reads MWFLFLLLPLWAGCA. Residues 27–236 form the Saposin B-type domain; that stretch reads SKCEVCKYVA…KEEKKQMDQP (210 aa). 3 disulfide bridges follow: C29/C188, C32/C176, and C86/C148. A coiled-coil region spans residues 136–160; sequence ETSAEVADMKKQCDVMMENYEEVIE. The disordered stretch occupies residues 186-243; the sequence is QSCLSEQGDSRKGDTGPSTGTKKQKKQGEKKNKSKKQNSGSKEEKKQMDQPMAAKEEL. Residues 226–243 show a composition bias toward basic and acidic residues; the sequence is SKEEKKQMDQPMAAKEEL.

This sequence belongs to the canopy family.

It localises to the endoplasmic reticulum. In terms of biological role, toll-like receptor (TLR)-specific co-chaperone for HSP90B1. Required for proper TLR folding and hence controls TLR exit from the endoplasmic reticulum. Consequently, required for immune responses. The sequence is that of Protein canopy homolog 3 (cnpy3) from Xenopus laevis (African clawed frog).